Reading from the N-terminus, the 706-residue chain is Centrosomal protein kizuna (706 aa).

The stretch at 63–113 forms a coiled coil; that stretch reads QRAKTRNLELLGNVENLASKLKEFSIDCSRLLQKRMEYKNHITRLKKDRRK. Residues 105–116 are compositionally biased toward basic residues; that stretch reads TRLKKDRRKMGS. 5 disordered regions span residues 105–184, 215–347, 571–603, 620–665, and 677–706; these read TRLK…LCMH, VREK…ASRG, EIKPARPSGTNAQTGEEQEIQSAEEDSADQSPV, SVAQ…KTKP, and ESDDSNSEIEMALRPQSCNTSSHDFDDFYD. Residues 118–127 show a composition bias toward basic and acidic residues; sequence GKSEADEHPS. 2 stretches are compositionally biased toward polar residues: residues 128–156 and 164–180; these read RLSTQGLSQSAAIFMGHQTSNGSSRNDGA and HTEQIPNHPSLPPSQSG. Basic and acidic residues predominate over residues 215–251; sequence VREKQMESDWDISQRAREQQRQEELKSPHTTLKEAEV. A compositionally biased stretch (low complexity) spans 272–283; it reads TRSPSPDTTDPS. Over residues 293–304 the composition is skewed to acidic residues; the sequence is GEDEEESAEDKD. The span at 308–320 shows a compositional bias: polar residues; it reads PINQNHSDYTSNI. Over residues 586 to 598 the composition is skewed to acidic residues; that stretch reads EEQEIQSAEEDSA. Over residues 638–648 the composition is skewed to basic and acidic residues; that stretch reads PDAHKLEKPEV.

This sequence belongs to the kizuna family.

It is found in the cytoplasm. It localises to the cytoskeleton. Its subcellular location is the microtubule organizing center. The protein localises to the centrosome. The protein resides in the cilium basal body. Centrosomal protein required for establishing a robust mitotic centrosome architecture that can endure the forces that converge on the centrosomes during spindle formation. Required for stabilizing the expanded pericentriolar material around the centriole. This chain is Centrosomal protein kizuna (kiz), found in Danio rerio (Zebrafish).